The primary structure comprises 78 residues: Large ribosomal subunit protein bL31 (78 aa).

Belongs to the bacterial ribosomal protein bL31 family. Type A subfamily. In terms of assembly, part of the 50S ribosomal subunit.

Its function is as follows. Binds the 23S rRNA. This chain is Large ribosomal subunit protein bL31 (rpmE), found in Rickettsia typhi (strain ATCC VR-144 / Wilmington).